Here is a 325-residue protein sequence, read N- to C-terminus: tRNA dimethylallyltransferase (325 aa).

ATP is bound at residue 12-19 (GPTASGKT). 14–19 (TASGKT) serves as a coordination point for substrate. Interaction with substrate tRNA regions lie at residues 37–40 (DSAL), 161–165 (QRIHR), and 244–249 (RCVGYR).

The protein belongs to the IPP transferase family. In terms of assembly, monomer. It depends on Mg(2+) as a cofactor.

The enzyme catalyses adenosine(37) in tRNA + dimethylallyl diphosphate = N(6)-dimethylallyladenosine(37) in tRNA + diphosphate. Functionally, catalyzes the transfer of a dimethylallyl group onto the adenine at position 37 in tRNAs that read codons beginning with uridine, leading to the formation of N6-(dimethylallyl)adenosine (i(6)A). In Chromobacterium violaceum (strain ATCC 12472 / DSM 30191 / JCM 1249 / CCUG 213 / NBRC 12614 / NCIMB 9131 / NCTC 9757 / MK), this protein is tRNA dimethylallyltransferase.